A 72-amino-acid chain; its full sequence is Translation initiation factor IF-1 (72 aa).

Positions 1-72 (MAKEEAITVD…SKGRITYRKK (72 aa)) constitute an S1-like domain.

It belongs to the IF-1 family. In terms of assembly, component of the 30S ribosomal translation pre-initiation complex which assembles on the 30S ribosome in the order IF-2 and IF-3, IF-1 and N-formylmethionyl-tRNA(fMet); mRNA recruitment can occur at any time during PIC assembly.

It is found in the cytoplasm. In terms of biological role, one of the essential components for the initiation of protein synthesis. Stabilizes the binding of IF-2 and IF-3 on the 30S subunit to which N-formylmethionyl-tRNA(fMet) subsequently binds. Helps modulate mRNA selection, yielding the 30S pre-initiation complex (PIC). Upon addition of the 50S ribosomal subunit IF-1, IF-2 and IF-3 are released leaving the mature 70S translation initiation complex. This Leptospira borgpetersenii serovar Hardjo-bovis (strain L550) protein is Translation initiation factor IF-1.